The sequence spans 138 residues: Small ribosomal subunit protein uS11c (138 aa).

A disordered region spans residues 1–23; it reads MAKPILRIGSRKNTRSGSRKNVR. Residues 9 to 23 are compositionally biased toward basic residues; the sequence is GSRKNTRSGSRKNVR.

The protein belongs to the universal ribosomal protein uS11 family. As to quaternary structure, part of the 30S ribosomal subunit.

It localises to the plastid. The protein localises to the chloroplast. In Crucihimalaya wallichii (Rock-cress), this protein is Small ribosomal subunit protein uS11c.